The following is a 141-amino-acid chain: Transcriptional regulator MraZ (141 aa).

SpoVT-AbrB domains lie at 5-47 and 75-118; these read EYNH…PNEE and AADC…SKER.

Belongs to the MraZ family. In terms of assembly, forms oligomers.

It is found in the cytoplasm. It localises to the nucleoid. This chain is Transcriptional regulator MraZ, found in Lachnoclostridium phytofermentans (strain ATCC 700394 / DSM 18823 / ISDg) (Clostridium phytofermentans).